Reading from the N-terminus, the 183-residue chain is Intraflagellar transport protein 27 homolog (183 aa).

GTP is bound by residues 12–19, 63–67, and 120–123; these read GAPTVGKT, DVSGQ, and NKSD.

It belongs to the small GTPase superfamily. Rab family. As to quaternary structure, component of the IFT complex B.

Its subcellular location is the cell projection. It is found in the cilium. The protein localises to the flagellum. Its function is as follows. Small GTPase-like component of the intraflagellar transport (IFT) complex B required for both anterograde and retrograde intraflagellar transport. May be involved in cargo loading of the retrograde transport. The sequence is that of Intraflagellar transport protein 27 homolog from Trypanosoma brucei brucei (strain 927/4 GUTat10.1).